A 435-amino-acid chain; its full sequence is N-lysine methyltransferase SMYD2-A (435 aa).

The SET domain occupies 7-241; the sequence is EGTERFLSPG…PEEEIFNSYI (235 aa). 17–19 lines the S-adenosyl-L-methionine pocket; sequence KGR. Zn(2+) contacts are provided by Cys-52, Cys-55, Cys-65, Cys-68, Cys-74, Cys-78, His-86, and Cys-90. The MYND-type zinc-finger motif lies at 52–90; it reads CECCFTRKEGLSKCGKCKQAYYCNVECQRGDWPMHKLEC. S-adenosyl-L-methionine contacts are provided by residues His-137, 206-207, and 258-260; these read NH and YFF.

Belongs to the class V-like SAM-binding methyltransferase superfamily.

Its subcellular location is the cytoplasm. The protein resides in the cytosol. It localises to the nucleus. It catalyses the reaction L-lysyl(4)-[histone H3] + 3 S-adenosyl-L-methionine = N(6),N(6),N(6)-trimethyl-L-lysyl(4)-[histone H3] + 3 S-adenosyl-L-homocysteine + 3 H(+). The catalysed reaction is L-lysyl-[protein] + S-adenosyl-L-methionine = N(6)-methyl-L-lysyl-[protein] + S-adenosyl-L-homocysteine + H(+). Its function is as follows. Protein-lysine N-methyltransferase that methylates both histones and non-histone proteins, including p53/TP53 and RB1. Specifically trimethylates histone H3 'Lys-4' (H3K4me3) in vivo. The activity requires interaction with HSP90alpha. Shows even higher methyltransferase activity on p53/TP53. Monomethylates 'Lys-370' of p53/TP53, leading to decreased DNA-binding activity and subsequent transcriptional regulation activity of p53/TP53. Monomethylates RB1 at 'Lys-860'. The chain is N-lysine methyltransferase SMYD2-A (smyd2a) from Danio rerio (Zebrafish).